The following is a 332-amino-acid chain: MENIIFSPLSSLPSIVEELNPYKIAVLTNDMLKSLWLDKIIELLGGDVFPIVIPDGEEYKTIETAIKIWDELVSFGFTRKSLLIGLGGGVITDIAGFVASTYMRGTLLGFIPTTLLAQVDAAIGGKTGVNFHGKNMIGTFYLPNFVLISTETLSTLPRIELLNGMAEVIKYAILDKNVYRLLQDVKNVEEIRNREDIIRESVNVKVRVVEEDLKESGKRRILNLGHTVGHAIEKLSGYKIKHGFAVSVGLIAAAKLGEKLYNFDSGKVIELVERFNLPTKLPYPPKDIIEAMKLDKKAWYGKIVFVIPVEIGRISIEDVPEELLLQVLGEIR.

NAD(+) is bound by residues 55–60, 89–93, 113–114, Lys-126, Lys-134, and 152–155; these read DGEEYK, GVITD, TT, and TLST. Residues Glu-167, His-226, and His-242 each coordinate Zn(2+).

This sequence belongs to the sugar phosphate cyclases superfamily. Dehydroquinate synthase family. NAD(+) serves as cofactor. Co(2+) is required as a cofactor. It depends on Zn(2+) as a cofactor.

It is found in the cytoplasm. It catalyses the reaction 7-phospho-2-dehydro-3-deoxy-D-arabino-heptonate = 3-dehydroquinate + phosphate. Its pathway is metabolic intermediate biosynthesis; chorismate biosynthesis; chorismate from D-erythrose 4-phosphate and phosphoenolpyruvate: step 2/7. Catalyzes the conversion of 3-deoxy-D-arabino-heptulosonate 7-phosphate (DAHP) to dehydroquinate (DHQ). This chain is 3-dehydroquinate synthase, found in Pyrococcus abyssi (strain GE5 / Orsay).